The following is a 342-amino-acid chain: MSEAIKTDVLIIGAGPCGLFAVFELGLLDIKAHLIDILDKVGGQCAELYPEKPIYDIPGVPMVTGQGLTDQLMEQIKPFSPTFHLGEMVEKVEKIGDPGFRVTTDAGKVFECKVVVIAAGGGSFQPKRPPVPGIEAYEGTSVFYAVRKMEQFRDKNVVIVGGGDSALDWTLNLHPLAKRITLVHRRDDFRAAPHSVEQMRALVASGKMDLRIGQVSALEGANGVLAAASIKGNDNSVETVACDMMLPFFGLTMKLGPVADWGIALENNLIPVETSAFETSVPGIFAIGDINTYPGKIKLILCGFHEGALMAQKAHRYVYPEKRLVFQYTTSSSSLQKKLGVN.

Residues C17, D36, Q44, Y49, V89, F124, D289, and T330 each coordinate FAD.

It belongs to the ferredoxin--NADP reductase type 2 family. Homodimer. The cofactor is FAD.

The catalysed reaction is 2 reduced [2Fe-2S]-[ferredoxin] + NADP(+) + H(+) = 2 oxidized [2Fe-2S]-[ferredoxin] + NADPH. In Bradyrhizobium sp. (strain BTAi1 / ATCC BAA-1182), this protein is Ferredoxin--NADP reductase.